The sequence spans 1116 residues: MTMMTPPPVDQPEDEEMLVPNSDLVDGPAQPMEVTQPETAASTVENQPAEDPPTLKFTWTIPNFSRQNTRKHYSDVFVVGGYKWRILIFPKGNNVDHLSMYLDVSDAASLPYGWSRYAQFSLAVVNQIHTRYTVRKETQHQFNARESDWGFTSFMPLSELYDPSRGYLVNDTVLVEAEVAVRKVLDYWSYDSKKETGFVGLKNQGATCYMNSLLQTLYHIPYFRKAVYHMPTTENDAPTASIPLALQSLFYKLQYNDTSVATKELTKSFGWDTYDSFMQHDVQELNRVLCEKLEDKMKGTVVEGTIQQLFEGHHMNYIECINVDFKSTRKESFYDLQLDVKGCKDVYASFDKYVEVERLEGDNKYHAEGHGLQDAKKGVLFIDFPPVLQLQLKRFEYDFMRDTMVKINDRYEFPLELDLDREDGKYLSPDADRSVRNLYTLHSVLVHSGGVHGGHYYAFIRPTLSDQWYKFDDERVTKEDLKRALEEQYGGEEELPQTNPGFNNNPPFKFTKYSNAYMLVYIRESDKDKIICNVDEKDIAEHLRVRLKKEQEEKEDKRRYKAQAHLYTIIKVARDEDLKEQIGKDIYFDLVDHDKVRSFRIQKQTPFQQFKEEVAKEFGVPVQLQRFWIWAKRQNHTYRPNRPLTPQEELQPVGQIREASNKANTAELKLFLEVEHLDLRPIPPPEKSKEDILLFFKLYDPEKAVLSYAGRLMVKSSSKPMDITGKLNEMVGFAPDEEIELFEEIKFEPCVMCEHLDKKTSFRLCQIEDGDIICFQKPLVNKEIECLYPAVPSFLEYVQNRQLVRFRALEKPKEDEFVLELSKQHTYDDVVEKVAEKLGLDDPSKLRLTSHNCYSQQPKPQPIKYRGVDHLSDMLVHYNQTSDILYYEVLDIPLPELQGLKTLKVAFHHATKEEVVIHNIRLPKQSTVGDVINELKTKVELSHPDAELRLLEVFYHKIYKIFPSTERIENINDQYWTLRAEEIPEEEKNIGPNDRLILVYHFAKETGQNQQVQNFGEPFFLVIHEGETLEEIKNRIQKKLHVSDEDFAKWKFAFMSMGRPEYLQDTDVVYNRFQRRDVYGAFEQYLGLEHADTTPKRAYAANQNRHAYEKPVKIYN.

Residues 1–10 (MTMMTPPPVD) are compositionally biased toward pro residues. Positions 1-52 (MTMMTPPPVDQPEDEEMLVPNSDLVDGPAQPMEVTQPETAASTVENQPAEDP) are disordered. A compositionally biased stretch (polar residues) spans 36-46 (QPETAASTVEN). One can recognise an MATH domain in the interval 54–179 (TLKFTWTIPN…NDTVLVEAEV (126 aa)). One can recognise a USP domain in the interval 199 to 524 (VGLKNQGATC…NAYMLVYIRE (326 aa)). The Nucleophile role is filled by cysteine 208. The active-site Proton acceptor is histidine 455.

This sequence belongs to the peptidase C19 family. Interacts with SIC/RON3.

The catalysed reaction is Thiol-dependent hydrolysis of ester, thioester, amide, peptide and isopeptide bonds formed by the C-terminal Gly of ubiquitin (a 76-residue protein attached to proteins as an intracellular targeting signal).. Recognizes and hydrolyzes the peptide bond at the C-terminal Gly of ubiquitin. Involved in the processing of poly-ubiquitin precursors as well as that of ubiquitinated proteins. Positive regulator of root meristem development that, together with UBP13, prevents the ubiquitination and turnover of RGFR1 induced by the RGF1 hormone peptide, thus influencing PLT1 and PLT2 expression. In Arabidopsis thaliana (Mouse-ear cress), this protein is Ubiquitin C-terminal hydrolase 12.